A 455-amino-acid chain; its full sequence is UDP-N-acetylmuramoyl-tripeptide--D-alanyl-D-alanine ligase (455 aa).

ATP is bound at residue 107-113 (GSCGKTS).

It belongs to the MurCDEF family. MurF subfamily.

The protein localises to the cytoplasm. The catalysed reaction is D-alanyl-D-alanine + UDP-N-acetyl-alpha-D-muramoyl-L-alanyl-gamma-D-glutamyl-meso-2,6-diaminopimelate + ATP = UDP-N-acetyl-alpha-D-muramoyl-L-alanyl-gamma-D-glutamyl-meso-2,6-diaminopimeloyl-D-alanyl-D-alanine + ADP + phosphate + H(+). Its pathway is cell wall biogenesis; peptidoglycan biosynthesis. In terms of biological role, involved in cell wall formation. Catalyzes the final step in the synthesis of UDP-N-acetylmuramoyl-pentapeptide, the precursor of murein. The polypeptide is UDP-N-acetylmuramoyl-tripeptide--D-alanyl-D-alanine ligase (Buchnera aphidicola subsp. Acyrthosiphon pisum (strain APS) (Acyrthosiphon pisum symbiotic bacterium)).